A 311-amino-acid chain; its full sequence is Methionyl-tRNA formyltransferase (311 aa).

110–113 (SLLP) is a binding site for (6S)-5,6,7,8-tetrahydrofolate.

The protein belongs to the Fmt family.

The enzyme catalyses L-methionyl-tRNA(fMet) + (6R)-10-formyltetrahydrofolate = N-formyl-L-methionyl-tRNA(fMet) + (6S)-5,6,7,8-tetrahydrofolate + H(+). Its function is as follows. Attaches a formyl group to the free amino group of methionyl-tRNA(fMet). The formyl group appears to play a dual role in the initiator identity of N-formylmethionyl-tRNA by promoting its recognition by IF2 and preventing the misappropriation of this tRNA by the elongation apparatus. In Streptococcus pyogenes serotype M18 (strain MGAS8232), this protein is Methionyl-tRNA formyltransferase.